The sequence spans 195 residues: Protein GrpE (195 aa).

The span at 1-20 shows a compositional bias: basic and acidic residues; the sequence is MSSKEQKTPDEQVLDQKEAA. The disordered stretch occupies residues 1–40; the sequence is MSSKEQKTPDEQVLDQKEAAKGQQADAAPETADVADPRDA.

The protein belongs to the GrpE family. Homodimer.

It is found in the cytoplasm. In terms of biological role, participates actively in the response to hyperosmotic and heat shock by preventing the aggregation of stress-denatured proteins, in association with DnaK and GrpE. It is the nucleotide exchange factor for DnaK and may function as a thermosensor. Unfolded proteins bind initially to DnaJ; upon interaction with the DnaJ-bound protein, DnaK hydrolyzes its bound ATP, resulting in the formation of a stable complex. GrpE releases ADP from DnaK; ATP binding to DnaK triggers the release of the substrate protein, thus completing the reaction cycle. Several rounds of ATP-dependent interactions between DnaJ, DnaK and GrpE are required for fully efficient folding. The polypeptide is Protein GrpE (Pectobacterium carotovorum subsp. carotovorum (strain PC1)).